We begin with the raw amino-acid sequence, 1024 residues long: Carbamoyl phosphate synthase large chain (1024 aa).

Residues 1-402 are carboxyphosphate synthetic domain; the sequence is MPKRTDLQTI…SLQKALRSTE (402 aa). Residues R129, R169, G175, G176, E208, I210, E215, G241, V242, H243, Q285, and E299 each coordinate ATP. The ATP-grasp 1 domain maps to 133 to 328; sequence QAAMKKIGVE…IAKIAALLAV (196 aa). Residues Q285, E299, and N301 each coordinate Mg(2+). Mn(2+) is bound by residues Q285, E299, and N301. Residues 403-546 are oligomerization domain; it reads GDIRGVYAEM…YSTYEWEDEV (144 aa). Residues 547-929 form a carbamoyl phosphate synthetic domain region; it reads APTDKPKVVI…AFYRAQLGAK (383 aa). Residues 671-863 form the ATP-grasp 2 domain; the sequence is NALCERLGLP…LAKSAARIAA (193 aa). ATP-binding residues include R707, Q747, L749, E754, G779, V780, H781, S782, Q822, and E834. The Mg(2+) site is built by Q822, E834, and N836. The Mn(2+) site is built by Q822, E834, and N836. The 95-residue stretch at 930–1024 folds into the MGS-like domain; that stretch reads NYLPLEGTAL…GVRSLQEWVK (95 aa). The interval 930-1024 is allosteric domain; the sequence is NYLPLEGTAL…GVRSLQEWVK (95 aa).

This sequence belongs to the CarB family. In terms of assembly, composed of two chains; the small (or glutamine) chain promotes the hydrolysis of glutamine to ammonia, which is used by the large (or ammonia) chain to synthesize carbamoyl phosphate. Tetramer of heterodimers (alpha,beta)4. It depends on Mg(2+) as a cofactor. Mn(2+) serves as cofactor.

The enzyme catalyses hydrogencarbonate + L-glutamine + 2 ATP + H2O = carbamoyl phosphate + L-glutamate + 2 ADP + phosphate + 2 H(+). The catalysed reaction is hydrogencarbonate + NH4(+) + 2 ATP = carbamoyl phosphate + 2 ADP + phosphate + 2 H(+). It functions in the pathway amino-acid biosynthesis; L-arginine biosynthesis; carbamoyl phosphate from bicarbonate: step 1/1. The protein operates within pyrimidine metabolism; UMP biosynthesis via de novo pathway; (S)-dihydroorotate from bicarbonate: step 1/3. Its function is as follows. Large subunit of the glutamine-dependent carbamoyl phosphate synthetase (CPSase). CPSase catalyzes the formation of carbamoyl phosphate from the ammonia moiety of glutamine, carbonate, and phosphate donated by ATP, constituting the first step of 2 biosynthetic pathways, one leading to arginine and/or urea and the other to pyrimidine nucleotides. The large subunit (synthetase) binds the substrates ammonia (free or transferred from glutamine from the small subunit), hydrogencarbonate and ATP and carries out an ATP-coupled ligase reaction, activating hydrogencarbonate by forming carboxy phosphate which reacts with ammonia to form carbamoyl phosphate. The polypeptide is Carbamoyl phosphate synthase large chain (Deinococcus radiodurans (strain ATCC 13939 / DSM 20539 / JCM 16871 / CCUG 27074 / LMG 4051 / NBRC 15346 / NCIMB 9279 / VKM B-1422 / R1)).